Reading from the N-terminus, the 89-residue chain is Large ribosomal subunit protein bL27 (89 aa).

Residues 1 to 21 (MAHKKSGGSSRNGRDSNPKYL) form a disordered region.

It belongs to the bacterial ribosomal protein bL27 family.

This is Large ribosomal subunit protein bL27 from Hyphomonas neptunium (strain ATCC 15444).